Reading from the N-terminus, the 876-residue chain is MAMPSYSSLSSHISITTTHTRPHPIFPCYNDTQSIPRFFISSDTGSSASKQRNIYLRLGSRKIIAGVGEGATSLSSHSDKMKTDSFPDPKLAKRDFPPGFWKDDIIDSIMSSNKVAAADEERVETLISEIKSMFRGMGDGETTPSAYDTAWVAKIPALDGSDHPHFPQTLQWILRNQLKDGSWGEEHHFLTYDRLLATLACIITLTVWRTGKTQVQKGIEFFKKHAAMMEDEADHRQPSGFEFVFPAMINEAKSLCLDLPYELPFIKQIIKKREAKLKRIPTDLLYTVPTIFLYYLEGLQEIVEWHKIIKLQSKDGSFLSSPASTAAVFMSTGNTKCLEFLNFVLMKFGNHAPCHYPIDLLERLWAVDTVQRLGIDRYFKEEIKEALDYIYSHWGERGIGWARENPVADIGVTAMGLRILRLNGYNVSSDVLRTFRDENGEFFSFMGQTERGVIDMLNLNRCSHVAFPGETVMEEAKHCTERYLWNALEDVDALDKWGLKKNIRGEVEYALKYPWLRSLPRLEARSYIENYGPNDAWLGKTMYIMPYINNGKYLELAKLDFNNVQSIHQKELRELRRWWKSSGFAELDFTRDRVAEIFFSIASSMFEPELATCRDVYTKSTICTVVLDDLYDAHGSVEDIKLFNEAVKRWDLFLLDRMPEHIKICFLGLYNLVNEIAEEGRKRQGRDVLGYIRNLWEIQLETFMKEAEWSEAKYVPSFHEYIETASVSIAGATLVLFGVLFTGEVLTDHILSQIDYRSKFAYLMGLTGRLINDTKTYQAERGEGEVASAIQCYMKDHPEFSEEEALKQIYTLMENALSDLKEEFLKAKDVPDKCKRLVFDYARSMQLFYQQGDGFTLAPNMEIKQHVKKILFEPVP.

Residues 1–64 (MAMPSYSSLS…YLRLGSRKII (64 aa)) constitute a chloroplast transit peptide. Residues D628, D632, N772, T776, and E780 each contribute to the Mg(2+) site. Residues 628-632 (DDLYD) carry the DDXXD motif motif.

It belongs to the terpene synthase family. Tpsd subfamily. The cofactor is Mg(2+).

It is found in the plastid. Its subcellular location is the chloroplast. It catalyses the reaction (+)-copalyl diphosphate = isopimara-7,15-diene + diphosphate. Its pathway is terpene metabolism; oleoresin biosynthesis. Functionally, involved in defensive oleoresin formation in conifers in response to insect attack or other injury. Involved in diterpene (C20) olefins biosynthesis. Monofunctional enzyme lacking the DXDD motif in the class II active site relevant for the cyclization of geranylgeranyl diphosphate (GGPP). Requires (+)-copalyl diphosphate ((+)-CPP) as substrate, but no activity with GGPP or ent-CPP. Isopimaradiene is the major products of the enzyme followed by sandaracopimaradiene. This is Monofunctional isopimaradiene synthase, chloroplastic from Pinus contorta (Shore pine).